Reading from the N-terminus, the 1214-residue chain is Sodium bicarbonate cotransporter 3 (1214 aa).

The segment covering 1-12 (MERFRLEKKLPG) has biased composition (basic and acidic residues). Disordered stretches follow at residues 1–22 (MERF…VDLG) and 52–93 (SKES…PSQR). Residues 1–608 (MERFRLEKKL…DFKDALSLQC (608 aa)) lie on the Extracellular side of the membrane. Phosphoserine is present on residues Ser52, Ser55, Ser84, Ser150, Leu165, and Cys168. A compositionally biased stretch (basic residues) spans 55–72 (SRRRHRHRGHKHHHRRRK). A compositionally biased stretch (basic and acidic residues) spans 73 to 85 (DKESDKEDGRESP). A glycan (N-linked (GlcNAc...) asparagine) is linked at Asn171. Phosphoserine is present on residues Ser233, Ser242, Ser255, Arg258, Ser260, Thr263, Gly264, and Ala267. Asn269 is a glycosylation site (N-linked (GlcNAc...) asparagine). Disordered regions lie at residues 289–346 (SRAG…IPTV), 362–408 (EEQK…ENST), and 552–572 (FHNG…HHAG). The span at 303–313 (VPTPQNSPPSS) shows a compositional bias: pro residues. A compositionally biased stretch (low complexity) spans 314–332 (PSISRLTSRSSQESQRQAP). The segment covering 379–392 (SPQSAPGNLDNSKS) has biased composition (polar residues). At Ser382 the chain carries Phosphoserine. An N-linked (GlcNAc...) asparagine glycan is attached at Asn398. 2 positions are modified to phosphoserine: Ser400 and Ser403. A glycan (N-linked (GlcNAc...) asparagine) is linked at Asn406. Ser407 and Ser556 each carry phosphoserine. A Phosphothreonine modification is found at Thr557. Basic and acidic residues predominate over residues 563 to 572 (TPKEAAHHAG). The helical transmembrane segment at 609 to 629 (LASILFLYCACMSPVITFGGL) threads the bilayer. Over 630 to 637 (LGEATEGR) the chain is Cytoplasmic. The chain crosses the membrane as a helical span at residues 638-658 (ISAIESLFGASLTGIAYSLFA). Over 659–695 (GQPLTILGSTGPVLVFEKILYKFCRDYQLSYLSLRTS) the chain is Extracellular. The chain crosses the membrane as a helical span at residues 696 to 716 (IGLWTSFLCIVLVATDASSLV). Residues 717 to 725 (CYITRFTEE) lie on the Cytoplasmic side of the membrane. Residues 726-746 (AFAALICIIFIYEALEKLFDL) traverse the membrane as a helical segment. A Phosphoserine modification is found at Lys742. Over 747–817 (GETYAFNMHN…VFLGSACGHH (71 aa)) the chain is Extracellular. Residues Cys766 and Cys768 are joined by a disulfide bond. 2 positions are modified to phosphoserine: Pro771 and Pro774. Asn776 is a glycosylation site (N-linked (GlcNAc...) asparagine). Ala780 is modified (phosphoserine). N-linked (GlcNAc...) asparagine glycosylation is found at Asn786 and Asn791. A disulfide bond links Cys802 and Cys814. The chain crosses the membrane as a helical span at residues 818 to 838 (GPYIPDVLFWCVILFFTTFFL). The Cytoplasmic portion of the chain corresponds to 839 to 861 (SSFLKQFKTKRYFPTKVRSTISD). A helical membrane pass occupies residues 862-882 (FAVFLTIVIMVTIDYLVGVPS). Residues 883-908 (PKLHVPEKFEPTHPERGWIISPLGDN) lie on the Extracellular side of the membrane. A helical membrane pass occupies residues 909–929 (PWWTLLIAAIPALLCTILIFM). At 930–954 (DQQITAVIINRKEHKLKKGAGYHLD) the chain is on the cytoplasmic side. The helical transmembrane segment at 955–975 (LLMVGVMLGVCSVMGLPWFVA) threads the bilayer. The Extracellular segment spans residues 976–1011 (ATVLSISHVNSLKVESECSAPGEQPKFLGIREQRVT). Phosphoserine is present on residues Glu1007, Val1010, and Phe1016. 2 essential for cell membrane localization and transport activity regions span residues 1008–1131 (QRVT…KREL) and 1127–1214 (TKRE…ETSL). A helical membrane pass occupies residues 1012-1032 (GLMIFILMGLSVFMTSVLKFI). The Cytoplasmic portion of the chain corresponds to 1033–1034 (PM). The chain crosses the membrane as a helical span at residues 1035–1055 (PVLYGVFLYMGVSSLKGIQLF). Residues 1056-1092 (DRIKLFGMPAKHQPDLIYLRYVPLWKVHIFTVIQLTC) lie on the Extracellular side of the membrane. Phosphoserine occurs at positions 1073, 1077, 1102, 1105, 1106, 1109, 1111, and 1115. The helical transmembrane segment at 1093–1113 (LVLLWVIKVSAAAVVFPMMVL) threads the bilayer. Over 1114-1214 (ALVFVRKLMD…KKYVDAETSL (101 aa)) the chain is Cytoplasmic. Positions 1134–1136 (LDD) are CA2-binding. Positions 1144 to 1162 (KKEDDKKKKEKEEAERMLQ) are enriched in basic and acidic residues. The tract at residues 1144–1169 (KKEDDKKKKEKEEAERMLQDDDDTVH) is disordered. The residue at position 1167 (Thr1167) is a Phosphothreonine. Phosphoserine is present on residues Ser1176, Ser1188, Asp1201, and Ser1213. The short motif at 1211-1214 (ETSL) is the PDZ-binding element.

This sequence belongs to the anion exchanger (TC 2.A.31) family. In terms of assembly, interacts with CFTR through NHERF1/EBP50. Interacts with USH1C. Forms a complex with ATP6V1B1 and NHERF1/EBP50. Interacts in a pH dependent-manner with CA2/carbonic anhydrase 2. In terms of tissue distribution, highly expressed in testis and spleen. Also expressed in retina, colon, small intestine, ovary, thymus, prostate, muscle, heart and kidney. As to expression, expressed in skeletal muscle and heart muscle.

The protein localises to the basolateral cell membrane. Its subcellular location is the apical cell membrane. It is found in the cell projection. The protein resides in the stereocilium. It localises to the cell membrane. The catalysed reaction is hydrogencarbonate(in) + Na(+)(in) = hydrogencarbonate(out) + Na(+)(out). With respect to regulation, transporter activity is regulated by CA2/carbonic anhydrase 2, cAMP and PKA. Insensitive to stilbene derivatives. Inhibited by 5-(N-ethyl-N-isopropyl)-amiloride (EIPA). In terms of biological role, electroneutral sodium- and bicarbonate-dependent cotransporter with a Na(+):HCO3(-) 1:1 stoichiometry. Mediates the sodium-dependent bicarbonate transport important for pH recovery after acid load as well as for regulation of steady-state pH in the duodenum and vascular smooth muscle cells. Plays a key role in macrophage acidification, mediating bicarbonate import into the cytoplasm which is crucial for net acid extrusion and maintenance of cytoplasmic pH during phagocytosis. Provides cellular bicarbonate for de novo purine and pyrimidine synthesis and is a key mediator of de novo nucleotide synthesis downstream of mTORC1 signaling in proliferating cells. Its function is as follows. Plays a key role in macrophage acidification, mediating bicarbonate import into the cytoplasm which is crucial for net acid extrusion and maintenance of cytoplasmic pH during phagocytosis. This Homo sapiens (Human) protein is Sodium bicarbonate cotransporter 3 (SLC4A7).